A 388-amino-acid polypeptide reads, in one-letter code: Chorismate synthase (388 aa).

NADP(+)-binding residues include R39 and R45. Positions 95 to 118 are disordered; that stretch reads EKNEKSRRVSRPRPGHADLVGGMK. Residues 130 to 132, 251 to 252, G296, 311 to 315, and R337 each bind FMN; these read RSS, NA, and KPIPT.

Belongs to the chorismate synthase family. In terms of assembly, homotetramer. It depends on FMNH2 as a cofactor.

It catalyses the reaction 5-O-(1-carboxyvinyl)-3-phosphoshikimate = chorismate + phosphate. It participates in metabolic intermediate biosynthesis; chorismate biosynthesis; chorismate from D-erythrose 4-phosphate and phosphoenolpyruvate: step 7/7. Functionally, catalyzes the anti-1,4-elimination of the C-3 phosphate and the C-6 proR hydrogen from 5-enolpyruvylshikimate-3-phosphate (EPSP) to yield chorismate, which is the branch point compound that serves as the starting substrate for the three terminal pathways of aromatic amino acid biosynthesis. This reaction introduces a second double bond into the aromatic ring system. The chain is Chorismate synthase from Listeria innocua serovar 6a (strain ATCC BAA-680 / CLIP 11262).